Consider the following 317-residue polypeptide: Cyclin-dependent kinase 1 (317 aa).

The 286-residue stretch at 7–292 folds into the Protein kinase domain; the sequence is YQRQEKVGEG…AKRALIHPYF (286 aa). Residues 13 to 21 and Lys37 contribute to the ATP site; that span reads VGEGTYGVV. Thr17 carries the phosphothreonine modification. A Phosphotyrosine; by SWE1 modification is found at Tyr18. The active-site Proton acceptor is the Asp133. Phosphothreonine; by CAK is present on Thr166. Residues 296 to 317 form a disordered region; it reads DDRDHNNYNEDNIGIDKHQNMQ.

Belongs to the protein kinase superfamily. CMGC Ser/Thr protein kinase family. CDC2/CDKX subfamily. Forms several complexes with cyclins CCN1, CLB2, CLN3, and HGC1. The CDC28-CCN1 complex associates with septin CDC11 upon hyphal induction. Interacts with IQG1, RFA2, and HSP90. Phosphorylated at Tyr-18 by SWE1 in a cell cycle-dependent manner. Yeast-form and hyphal cells display similar dynamics of phosphorylation and dephosphorylation of Tyr-18. Tyr-18 phosphorylation leads to inhibition of CDC28 kinase activity.

The enzyme catalyses L-seryl-[protein] + ATP = O-phospho-L-seryl-[protein] + ADP + H(+). It carries out the reaction L-threonyl-[protein] + ATP = O-phospho-L-threonyl-[protein] + ADP + H(+). Phosphorylation at Thr-17 or Tyr-18 inactivates the enzyme, while phosphorylation at Thr-166 activates it. Functionally, cyclin-dependent kinase that acts as a master regulator of the mitotic and meiotic cell cycles. May drive the G1-S transition. Plays a role in mitotic exit. Plays a role in the expression of morphology-related transcription factors, and especially hyphae-specific genes. Binds distinct cyclin subunits as cells progress through the division cycle or flamentous growth. The CDC28-CLB2 complex regulates cytokinesis partly by phosphorylating the actomyosin ring component IQG1. The CDC28-CLN3 complex phosphorylates SLA1 which regulates cortical actin patch dynamics. The CDC28-CCN1 complex phosphorylates CDC11 and SEC2 upon induction of filamentous growth. The CDC28-HGC1 complex also phosphorylates SEC2 and maintains CDC11 phosphorylation throughout hyphal growth. Moreover, the CDC28-HGC1 complex phosphorylates and prevents RGA2 from localizing to hyphal tips, leading to localized CDC42 activation for hyphal extension. CDC28-HGC1 phosphorylation of EFG1 represses cell separation genes during hyphal growth. Additional substrates for CDC28 are RFA2 in G1-phase; MOB2, which is required for the maintenance of polarisome components and for inhibition of cell separation in hyphae; and GIN4 to regulate its association to SEP7 and subsequent septin ring assembly. The polypeptide is Cyclin-dependent kinase 1 (Candida albicans (strain SC5314 / ATCC MYA-2876) (Yeast)).